A 516-amino-acid polypeptide reads, in one-letter code: MDKCVITGHHFSVENMNHNNNNYDFDNKNNSIGGGGGGGGSSSSRSSSSRSSSNRSSSGSSGGSGSNSSSSINNIINSDNDFKTERKQTKSPPLTLPNIKTTTTTTTTTTTTTTTTTKNENISSSESENSSSRVGSPNCNKKVKKTKTITISPTGYNINSKDDINKFTTYGYTNEKSNARRDPKWINDIIERYNRLKSESLNNNYNGSSSNNNNINNINNNSNNTTSPCQSPSSNTATITSISSPTSSSSSLSSPSFSINNIVNQDVDENDGCDRMNYTLLSQNNNNNNNNNNNNNNNNNNNNNNNNNNNNNNNNNNNNNNNNNNNNNNNNNNNNNNNNNTNTNNNGDECIVKPISLIQNKKSGQRSLKTKEHKEILEALYRVTLYPTSEETKTISQILGMTFGQVKSSFRHRREKLSKSGLFSYAKNLKNCGKSTAPLDNFFENCKYLTTKETEEFAAAYDVSFEQIKNYFKGKRAKLNKLSSKAIQDKDNQDNDNNNSNNNENNDDSYSDEGLF.

Over residues 22–31 (NYDFDNKNNS) the composition is skewed to low complexity. Disordered regions lie at residues 22 to 140 (NYDF…PNCN), 200 to 256 (SLNN…SSPS), and 268 to 348 (DEND…NNGD). The segment covering 32–41 (IGGGGGGGGS) has biased composition (gly residues). Composition is skewed to low complexity over residues 42 to 59 (SSSRSSSSRSSSNRSSSG), 66 to 78 (SNSSSSINNIINS), and 101 to 132 (TTTTTTTTTTTTTTTTTKNENISSSESENSSS). The segment covering 284-346 (NNNNNNNNNN…NNNNTNTNNN (63 aa)) has biased composition (low complexity). 2 DNA-binding regions (homeobox) span residues 362–421 (KSGQ…SKSG) and 424–483 (SYAK…NKLS). The tract at residues 483-516 (SSKAIQDKDNQDNDNNNSNNNENNDDSYSDEGLF) is disordered. Residues 495-504 (NDNNNSNNNE) show a composition bias toward low complexity. Positions 505–516 (NNDDSYSDEGLF) are enriched in acidic residues.

The protein localises to the nucleus. Its function is as follows. Putative transcription factor. In Dictyostelium discoideum (Social amoeba), this protein is Homeobox protein 6 (hbx6).